The sequence spans 476 residues: Trigger factor (476 aa).

Positions 174 to 261 (GDIAVVSFKG…LKDLKEKELP (88 aa)) constitute a PPIase FKBP-type domain. The interval 436–476 (KENTTKTSKTTKNSKTTKATKTTKTTKTTKTSKTQNKKEKK) is disordered. A compositionally biased stretch (low complexity) spans 440–469 (TKTSKTTKNSKTTKATKTTKTTKTTKTSKT).

It belongs to the FKBP-type PPIase family. Tig subfamily.

The protein localises to the cytoplasm. It carries out the reaction [protein]-peptidylproline (omega=180) = [protein]-peptidylproline (omega=0). Involved in protein export. Acts as a chaperone by maintaining the newly synthesized protein in an open conformation. Functions as a peptidyl-prolyl cis-trans isomerase. This chain is Trigger factor, found in Prochlorococcus marinus (strain MIT 9215).